The primary structure comprises 361 residues: Alternative oxidase, mitochondrial (361 aa).

A helical membrane pass occupies residues 156–178 (YLVRNVFLESVAGVPGMVAGMLR). Fe cation is bound by residues glutamate 164, glutamate 203, and histidine 206. A helical membrane pass occupies residues 218–240 (WFMRLAVLGAQGVFFNAMFLSYL). Glutamate 254, glutamate 309, and histidine 312 together coordinate Fe cation. Residues 318–328 (TLGNLDQNSDP) are compositionally biased toward polar residues. Residues 318-361 (TLGNLDQNSDPNPYASKYDNPNVPHPRKDIKYLKPSGWEREEVM) are disordered. Over residues 343 to 361 (PRKDIKYLKPSGWEREEVM) the composition is skewed to basic and acidic residues.

The protein belongs to the alternative oxidase family. Fe cation is required as a cofactor.

It is found in the mitochondrion inner membrane. Functionally, catalyzes cyanide-resistant oxygen consumption. May increase respiration when the cytochrome respiratory pathway is restricted, or in response to low temperatures. The chain is Alternative oxidase, mitochondrial (AOX1) from Venturia inaequalis (Apple scab fungus).